Reading from the N-terminus, the 319-residue chain is 4-diphosphocytidyl-2-C-methyl-D-erythritol kinase (319 aa).

K21 is an active-site residue. Position 106-116 (106-116 (PIGAGLAGGSS)) interacts with ATP. The active site involves D148.

This sequence belongs to the GHMP kinase family. IspE subfamily.

The enzyme catalyses 4-CDP-2-C-methyl-D-erythritol + ATP = 4-CDP-2-C-methyl-D-erythritol 2-phosphate + ADP + H(+). Its pathway is isoprenoid biosynthesis; isopentenyl diphosphate biosynthesis via DXP pathway; isopentenyl diphosphate from 1-deoxy-D-xylulose 5-phosphate: step 3/6. Its function is as follows. Catalyzes the phosphorylation of the position 2 hydroxy group of 4-diphosphocytidyl-2C-methyl-D-erythritol. This is 4-diphosphocytidyl-2-C-methyl-D-erythritol kinase from Prochlorococcus marinus (strain MIT 9313).